We begin with the raw amino-acid sequence, 244 residues long: MSRNIDFSAFQLKVIAIIAMSLDHSALLFLSDGSWRYECLRFVGRLTLPLMCFFLVEGFFHSRNHQKYLGRLLFFGVIAQPFYSWMIAFDQIDSADLRFFLQTGNVLFTLALALLALMIRASRLSVPLKITLIFALSFAALYCDWGIYPVIFTLVLAHYYPERKAQTIAYLLAAMGLLLLADRQIFAVMPSLVLHIMPAGILLPPLFWHFYHGKKGARFGGRYAFYLFYPVHIALLCSAKMFLQ.

The protein is Probable fimbrial assembly protein FimC, serogroup H1 (fimC) of Dichelobacter nodosus (Bacteroides nodosus).